The following is a 289-amino-acid chain: 4-hydroxy-tetrahydrodipicolinate synthase (289 aa).

Thr-43 contacts pyruvate. Tyr-131 functions as the Proton donor/acceptor in the catalytic mechanism. Lys-160 acts as the Schiff-base intermediate with substrate in catalysis. Val-200 contacts pyruvate.

This sequence belongs to the DapA family. Homotetramer; dimer of dimers.

The protein resides in the cytoplasm. The enzyme catalyses L-aspartate 4-semialdehyde + pyruvate = (2S,4S)-4-hydroxy-2,3,4,5-tetrahydrodipicolinate + H2O + H(+). The protein operates within amino-acid biosynthesis; L-lysine biosynthesis via DAP pathway; (S)-tetrahydrodipicolinate from L-aspartate: step 3/4. Its function is as follows. Catalyzes the condensation of (S)-aspartate-beta-semialdehyde [(S)-ASA] and pyruvate to 4-hydroxy-tetrahydrodipicolinate (HTPA). This chain is 4-hydroxy-tetrahydrodipicolinate synthase, found in Methanococcus maripaludis (strain DSM 14266 / JCM 13030 / NBRC 101832 / S2 / LL).